Consider the following 233-residue polypeptide: MKEEIAATVVFLTMLVKKHKQLSKQKIEKFAAKLTTLLFAKYKTHWYAENPTKGQAFRCIRINECQALDAVLEKACTESNVDFNELGLPKEMTIWVDPFEVCCRYGEKNDPFTIASFKGKDGYNAPKRISNAVEKATSDYHSGTSSDEEPTNKEPKTIPKVSNPNSIYQCADYTQAIPSWSQYPRRKNYQNDGYPHQPMPYYPQQKPYKAFRRSASTFSGPRVDRYHWVNMKR.

A disordered region spans residues 135 to 165 (KATSDYHSGTSSDEEPTNKEPKTIPKVSNPN).

The protein belongs to the BTG family.

The chain is Maternal B9.15 protein from Xenopus laevis (African clawed frog).